A 331-amino-acid chain; its full sequence is UDP-galactose/UDP-glucose transporter 3 (331 aa).

Helical transmembrane passes span 11 to 31, 49 to 69, 80 to 100, 112 to 132, 135 to 155, 170 to 190, 206 to 226, and 245 to 265; these read VLLLSFCVAGIWAAYIYQGIL, HLAFLNLAQNVICLVWSYIMI, APWWTYWSAGITNTIGPAMGI, VLAKSSKMIPVMLMGSLVYGI, TLPEYLCTFLVAGGVSMFALL, APLGYGLCFLNLAFDGFTNAT, IMLGMNLWGTIYNMVYMFGLP, and WDILMYCLCGAVGQNFIFLTI. A Di-lysine motif motif is present at residues 327–331; it reads KKKKA.

The protein belongs to the nucleotide-sugar transporter family. UDP-galactose:UMP antiporter (TC 2.A.7.11) subfamily. In terms of tissue distribution, mostly expressed in flowers, and, to a lower extent, in roots, stems and leaves.

The protein localises to the endoplasmic reticulum membrane. It localises to the golgi apparatus membrane. Functionally, essential sugar transporter required for the transport of UDP-glucose from the cytoplasm into the Golgi and the endoplasmic reticulum. Essential for pollen development and involved in embryo sac progress. The protein is UDP-galactose/UDP-glucose transporter 3 of Arabidopsis thaliana (Mouse-ear cress).